The sequence spans 564 residues: Serine/threonine-protein kinase PknA (564 aa).

The 263-residue stretch at 9-271 (YRVIKTLGSG…TAREMLEALQ (263 aa)) folds into the Protein kinase domain. ATP-binding positions include 15-23 (LGSGGFGET) and Lys40. The active-site Proton acceptor is Asp139. Polar residues predominate over residues 360–406 (QPVTQTTSLPSETTISNNDTPTVEPSPTDTPETPISQTVTQDPTPQA). The disordered stretch occupies residues 360 to 458 (QPVTQTTSLP…PVEATDRPSP (99 aa)). Positions 428 to 445 (TTEPTTSVPQPTTPSEPQ) are enriched in low complexity.

This sequence belongs to the protein kinase superfamily. Ser/Thr protein kinase family.

The catalysed reaction is L-seryl-[protein] + ATP = O-phospho-L-seryl-[protein] + ADP + H(+). It carries out the reaction L-threonyl-[protein] + ATP = O-phospho-L-threonyl-[protein] + ADP + H(+). Functionally, probably required for both normal cellular growth and differentiation. Inactivation of pknA leads to colonies that appear light green and rough in the absence of combined nitrogen. This chain is Serine/threonine-protein kinase PknA (pknA), found in Nostoc sp. (strain PCC 7120 / SAG 25.82 / UTEX 2576).